Reading from the N-terminus, the 56-residue chain is Small ribosomal subunit protein uS14 (56 aa).

A Phosphoserine modification is found at Ser-9. Arg-12 carries the omega-N-methylarginine modification. Cys-21, Cys-24, Cys-39, and Cys-42 together coordinate Zn(2+). Lys-48 carries the post-translational modification N6-acetyllysine.

It belongs to the universal ribosomal protein uS14 family. Component of the 40S small ribosomal subunit. Zn(2+) is required as a cofactor.

The protein resides in the cytoplasm. Its subcellular location is the cytosol. It localises to the rough endoplasmic reticulum. Component of the small ribosomal subunit. The ribosome is a large ribonucleoprotein complex responsible for the synthesis of proteins in the cell. The polypeptide is Small ribosomal subunit protein uS14 (Rps29) (Mus musculus (Mouse)).